A 319-amino-acid polypeptide reads, in one-letter code: 4-hydroxy-3-methylbut-2-enyl diphosphate reductase (319 aa).

[4Fe-4S] cluster is bound at residue C17. (2E)-4-hydroxy-3-methylbut-2-enyl diphosphate-binding residues include H46 and H79. Dimethylallyl diphosphate is bound by residues H46 and H79. Residues H46 and H79 each contribute to the isopentenyl diphosphate site. Position 101 (C101) interacts with [4Fe-4S] cluster. H129 serves as a coordination point for (2E)-4-hydroxy-3-methylbut-2-enyl diphosphate. H129 provides a ligand contact to dimethylallyl diphosphate. H129 is an isopentenyl diphosphate binding site. Catalysis depends on E131, which acts as the Proton donor. Residue T170 coordinates (2E)-4-hydroxy-3-methylbut-2-enyl diphosphate. A [4Fe-4S] cluster-binding site is contributed by C200. Positions 228, 229, 230, and 273 each coordinate (2E)-4-hydroxy-3-methylbut-2-enyl diphosphate. Positions 228, 229, 230, and 273 each coordinate dimethylallyl diphosphate. Isopentenyl diphosphate is bound by residues S228, S229, N230, and S273.

This sequence belongs to the IspH family. It depends on [4Fe-4S] cluster as a cofactor.

The enzyme catalyses isopentenyl diphosphate + 2 oxidized [2Fe-2S]-[ferredoxin] + H2O = (2E)-4-hydroxy-3-methylbut-2-enyl diphosphate + 2 reduced [2Fe-2S]-[ferredoxin] + 2 H(+). The catalysed reaction is dimethylallyl diphosphate + 2 oxidized [2Fe-2S]-[ferredoxin] + H2O = (2E)-4-hydroxy-3-methylbut-2-enyl diphosphate + 2 reduced [2Fe-2S]-[ferredoxin] + 2 H(+). It functions in the pathway isoprenoid biosynthesis; dimethylallyl diphosphate biosynthesis; dimethylallyl diphosphate from (2E)-4-hydroxy-3-methylbutenyl diphosphate: step 1/1. The protein operates within isoprenoid biosynthesis; isopentenyl diphosphate biosynthesis via DXP pathway; isopentenyl diphosphate from 1-deoxy-D-xylulose 5-phosphate: step 6/6. Functionally, catalyzes the conversion of 1-hydroxy-2-methyl-2-(E)-butenyl 4-diphosphate (HMBPP) into a mixture of isopentenyl diphosphate (IPP) and dimethylallyl diphosphate (DMAPP). Acts in the terminal step of the DOXP/MEP pathway for isoprenoid precursor biosynthesis. This is 4-hydroxy-3-methylbut-2-enyl diphosphate reductase from Cereibacter sphaeroides (strain ATCC 17023 / DSM 158 / JCM 6121 / CCUG 31486 / LMG 2827 / NBRC 12203 / NCIMB 8253 / ATH 2.4.1.) (Rhodobacter sphaeroides).